Consider the following 97-residue polypeptide: DNA-directed RNA polymerase subunit omega (97 aa).

This sequence belongs to the RNA polymerase subunit omega family. In terms of assembly, the RNAP catalytic core consists of 2 alpha, 1 beta, 1 beta' and 1 omega subunit. When a sigma factor is associated with the core the holoenzyme is formed, which can initiate transcription.

The enzyme catalyses RNA(n) + a ribonucleoside 5'-triphosphate = RNA(n+1) + diphosphate. Its function is as follows. Promotes RNA polymerase assembly. Latches the N- and C-terminal regions of the beta' subunit thereby facilitating its interaction with the beta and alpha subunits. This Coxiella burnetii (strain Dugway 5J108-111) protein is DNA-directed RNA polymerase subunit omega.